The following is a 475-amino-acid chain: MMPFEAVIGLEVHVQLNTKTKIFCSCSTSFGESPNSNTCPVCLGLPGALPVLNKEVVKKAIQLGTAIEANINQYSIFARKNYFYPDLPKAYQISQFEVPIVSDGKLEIDTKDGAKIVRIERVHMEEDAGKNIHEGSYSLVDLNRACTPLLEIVSKPDMRNSEEAIAYLKKLHAIVRFIGISDANMQEGNFRCDANVSIRPKGDEKLYTRVEIKNLNSFRFIAKAIEYEIERQSAAWESGRYHEEVVQETRLFDTAKGITLSMRNKEESADYRYFKDPDLYPVFIDEKLLKEAQKINELPGAKKIRYVRDFNLKEDDANLLVSDPLLAEYFESMLNLGVKAKTSVTWLCVELLGRLKAETTLENCGVSAHMLGALAKRIDEGKISGKSAKDVLDKLLEEKGGDVDALIEQMGLSQVNDTEAIVKVVEEVLKNNADKVLEYKSGKDKLFGFFVGQAMKNLKGANPSVVNAILKEKLD.

The protein belongs to the GatB/GatE family. GatB subfamily. Heterotrimer of A, B and C subunits.

It carries out the reaction L-glutamyl-tRNA(Gln) + L-glutamine + ATP + H2O = L-glutaminyl-tRNA(Gln) + L-glutamate + ADP + phosphate + H(+). The catalysed reaction is L-aspartyl-tRNA(Asn) + L-glutamine + ATP + H2O = L-asparaginyl-tRNA(Asn) + L-glutamate + ADP + phosphate + 2 H(+). Functionally, allows the formation of correctly charged Asn-tRNA(Asn) or Gln-tRNA(Gln) through the transamidation of misacylated Asp-tRNA(Asn) or Glu-tRNA(Gln) in organisms which lack either or both of asparaginyl-tRNA or glutaminyl-tRNA synthetases. The reaction takes place in the presence of glutamine and ATP through an activated phospho-Asp-tRNA(Asn) or phospho-Glu-tRNA(Gln). The protein is Aspartyl/glutamyl-tRNA(Asn/Gln) amidotransferase subunit B of Helicobacter pylori (strain HPAG1).